A 170-amino-acid chain; its full sequence is Glycine cleavage system H protein, mitochondrial (170 aa).

The N-terminal 45 residues, 1-45 (MSLRVVRSVRAVACSLRIALASCPPRPWAPSAAAVRSLRTGSALL), are a transit peptide targeting the mitochondrion. The Lipoyl-binding domain occupies 63 to 145 (IGTVGISNFA…YEDGWLIKMT (83 aa)). N6-lipoyllysine is present on K104.

The protein belongs to the GcvH family. In terms of assembly, the glycine cleavage system is composed of four proteins: P (GLDC), T (GCST), L (DLD) and H (GCSH). Interacts with GLDC. It depends on (R)-lipoate as a cofactor.

Its subcellular location is the mitochondrion. In terms of biological role, the glycine cleavage system catalyzes the degradation of glycine. The H protein (GCSH) shuttles the methylamine group of glycine from the P protein (GLDC) to the T protein (GCST). Has a pivotal role in the lipoylation of enzymes involved in cellular energetics such as the mitochondrial dihydrolipoyllysine-residue acetyltransferase component of pyruvate dehydrogenase complex (DLAT), and the mitochondrial dihydrolipoyllysine-residue succinyltransferase component of 2-oxoglutarate dehydrogenase complex (DLST). The polypeptide is Glycine cleavage system H protein, mitochondrial (Rattus norvegicus (Rat)).